The chain runs to 400 residues: Putative F-box protein At5g41510 (400 aa).

The 46-residue stretch at 2-47 (ATMISNLPRDLIEEIFSRVPLTSMKAVRLTCKSWNNLSKSESFTKV) folds into the F-box domain.

In Arabidopsis thaliana (Mouse-ear cress), this protein is Putative F-box protein At5g41510.